We begin with the raw amino-acid sequence, 178 residues long: Long polar fimbria protein A (178 aa).

The first 24 residues, 1 to 24 (MEFLMKKVVFALSALAVVSTSAFA), serve as a signal peptide directing secretion.

This sequence belongs to the fimbrial protein family.

It localises to the fimbrium. The protein is Long polar fimbria protein A (lpfA) of Salmonella typhimurium (strain LT2 / SGSC1412 / ATCC 700720).